The following is a 323-amino-acid chain: Ribonuclease Z (323 aa).

Positions 62, 64, 66, 67, 140, 211, and 270 each coordinate Zn(2+). Catalysis depends on Asp66, which acts as the Proton acceptor.

The protein belongs to the RNase Z family. In terms of assembly, homodimer. It depends on Zn(2+) as a cofactor.

It catalyses the reaction Endonucleolytic cleavage of RNA, removing extra 3' nucleotides from tRNA precursor, generating 3' termini of tRNAs. A 3'-hydroxy group is left at the tRNA terminus and a 5'-phosphoryl group is left at the trailer molecule.. In terms of biological role, zinc phosphodiesterase, which displays some tRNA 3'-processing endonuclease activity. Probably involved in tRNA maturation, by removing a 3'-trailer from precursor tRNA. This chain is Ribonuclease Z, found in Marinobacter nauticus (strain ATCC 700491 / DSM 11845 / VT8) (Marinobacter aquaeolei).